We begin with the raw amino-acid sequence, 159 residues long: Ribosomal RNA large subunit methyltransferase H (159 aa).

Residues Leu76, Gly108, and 127 to 132 (FGRMTL) each bind S-adenosyl-L-methionine.

It belongs to the RNA methyltransferase RlmH family. In terms of assembly, homodimer.

It localises to the cytoplasm. It catalyses the reaction pseudouridine(1915) in 23S rRNA + S-adenosyl-L-methionine = N(3)-methylpseudouridine(1915) in 23S rRNA + S-adenosyl-L-homocysteine + H(+). Functionally, specifically methylates the pseudouridine at position 1915 (m3Psi1915) in 23S rRNA. This Lactococcus lactis subsp. cremoris (strain SK11) protein is Ribosomal RNA large subunit methyltransferase H.